A 579-amino-acid polypeptide reads, in one-letter code: Proline--tRNA ligase (579 aa).

Belongs to the class-II aminoacyl-tRNA synthetase family. ProS type 1 subfamily. Homodimer.

It localises to the cytoplasm. It carries out the reaction tRNA(Pro) + L-proline + ATP = L-prolyl-tRNA(Pro) + AMP + diphosphate. In terms of biological role, catalyzes the attachment of proline to tRNA(Pro) in a two-step reaction: proline is first activated by ATP to form Pro-AMP and then transferred to the acceptor end of tRNA(Pro). As ProRS can inadvertently accommodate and process non-cognate amino acids such as alanine and cysteine, to avoid such errors it has two additional distinct editing activities against alanine. One activity is designated as 'pretransfer' editing and involves the tRNA(Pro)-independent hydrolysis of activated Ala-AMP. The other activity is designated 'posttransfer' editing and involves deacylation of mischarged Ala-tRNA(Pro). The misacylated Cys-tRNA(Pro) is not edited by ProRS. This Hamiltonella defensa subsp. Acyrthosiphon pisum (strain 5AT) protein is Proline--tRNA ligase.